We begin with the raw amino-acid sequence, 215 residues long: Adenylate kinase (215 aa).

10 to 15 (GAGKGT) lines the ATP pocket. An NMP region spans residues 30–59 (STGDMFRAAIKDQTPLGQEAKSYMDKGELV). Residues threonine 31, arginine 36, 57 to 59 (ELV), 85 to 88 (GFPR), and glutamine 92 each bind AMP. An LID region spans residues 126-163 (GRRICPTCGATYHVIYNPPKVEGVCDIDGSALVQREDD). Residue arginine 127 participates in ATP binding. 2 residues coordinate Zn(2+): cysteine 130 and cysteine 133. Residue 136 to 137 (TY) coordinates ATP. Cysteine 150 and aspartate 153 together coordinate Zn(2+). Residues arginine 160 and arginine 171 each coordinate AMP. Arginine 199 provides a ligand contact to ATP.

Belongs to the adenylate kinase family. As to quaternary structure, monomer.

The protein resides in the cytoplasm. The enzyme catalyses AMP + ATP = 2 ADP. Its pathway is purine metabolism; AMP biosynthesis via salvage pathway; AMP from ADP: step 1/1. In terms of biological role, catalyzes the reversible transfer of the terminal phosphate group between ATP and AMP. Plays an important role in cellular energy homeostasis and in adenine nucleotide metabolism. The chain is Adenylate kinase from Exiguobacterium sibiricum (strain DSM 17290 / CCUG 55495 / CIP 109462 / JCM 13490 / 255-15).